The primary structure comprises 294 residues: Ventral anterior homeobox 2b (294 aa).

Basic and acidic residues predominate over residues 1-10 (MGDGVSEERS). Disordered regions lie at residues 1-27 (MGDG…VRDR), 43-65 (KDIP…DSQS), 149-168 (RRTK…SSST), 190-223 (PAPP…PVIS), and 272-294 (SSAF…KSTS). The segment at residues 98–157 (PKRTRTSFTAEQLYRLELEFQRCQYVVGRERTELARQLNLSETQVKVWFQNRRTKQKKDQ) is a DNA-binding region (homeobox). A compositionally biased stretch (basic and acidic residues) spans 154–165 (KKDQSRDSEKRS). Low complexity predominate over residues 197–219 (SSQNNMGTSSGNGTSLGTSGSTS). Over residues 279–288 (TRLDRKDTAS) the composition is skewed to basic and acidic residues.

It belongs to the EMX homeobox family.

The protein resides in the nucleus. Its function is as follows. Transcription factor that may function in dorsoventral specification of the forebrain. Regulates the expression of Wnt signaling antagonists. In Xenopus laevis (African clawed frog), this protein is Ventral anterior homeobox 2b (vax2-b).